A 1304-amino-acid chain; its full sequence is Histone-lysine N-methyltransferase met-2 (1304 aa).

Positions 1–16 (MDQQEPSNNVDTSSIL) are enriched in polar residues. Residues 1 to 31 (MDQQEPSNNVDTSSILSDDGMETQEQSSFVT) form a disordered region. A coiled-coil region spans residues 97 to 129 (NESEQEAVAAQRRVDAEKTAKDEAELKQQEEAE). An MBD domain is found at 834 to 909 (FHRNSPIHTP…FSFDARIDTA (76 aa)). In terms of domain architecture, Pre-SET spans 971–1049 (SGCSCDGDCS…SCYNRVVQNN (79 aa)). Zn(2+)-binding residues include cysteine 973, cysteine 975, cysteine 979, cysteine 985, cysteine 987, cysteine 1030, cysteine 1034, cysteine 1036, and cysteine 1041. Residues 1052 to 1277 (YPMHIFKTAQ…AGDELTWDYQ (226 aa)) enclose the SET domain. S-adenosyl-L-methionine-binding positions include 1062–1064 (SGW), aspartate 1098, and tyrosine 1100. The span at 1113 to 1122 (EKGREDHETD) shows a compositional bias: basic and acidic residues. The disordered stretch occupies residues 1113–1201 (EKGREDHETD…DSMEKDNIES (89 aa)). The segment covering 1128-1144 (DESDYDDEEGSDGDSGD) has biased composition (acidic residues). The span at 1152-1165 (KRQDSSESGEETKR) shows a compositional bias: basic and acidic residues. The segment covering 1166 to 1178 (LTRQKRKQSKKSG) has biased composition (basic residues). Over residues 1182 to 1201 (SVEKDDTTPRDSMEKDNIES) the composition is skewed to basic and acidic residues. Residues arginine 1231 and 1234-1235 (NH) contribute to the S-adenosyl-L-methionine site. Zn(2+)-binding residues include cysteine 1237, cysteine 1290, cysteine 1292, and cysteine 1297. One can recognise a Post-SET domain in the interval 1286-1302 (TQLTCHCGAENCTGRLL).

Belongs to the class V-like SAM-binding methyltransferase superfamily.

Its subcellular location is the nucleus. It localises to the chromosome. The protein resides in the cytoplasm. It catalyses the reaction N(6)-methyl-L-lysyl(9)-[histone H3] + S-adenosyl-L-methionine = N(6),N(6)-dimethyl-L-lysyl(9)-[histone H3] + S-adenosyl-L-homocysteine + H(+). The enzyme catalyses L-lysyl(9)-[histone H3] + S-adenosyl-L-methionine = N(6)-methyl-L-lysyl(9)-[histone H3] + S-adenosyl-L-homocysteine + H(+). Its function is as follows. Histone methyltransferase which is required for the mono- and dimethylation of 'Lys-9' of histone H3. This increases the efficiency of set-25-mediated trimethylation of histone H3 'Lys-9'. Involved in the transcriptional repression of lin-3 which is required for the negative regulation of vulval cell fate specification during postembryonic development. Has a role in blocking checkpoint signaling and mediating the transcriptional silencing of meiotic sex chromosome inactivation; a mechanism which enables checkpoint proteins to distinguish between the partnerless male X chromosome and asynapsed chromosomes thereby shielding the lone X from inappropriate activation of an apoptotic program. Operates redundantly with set-25 to position chromatin at the nuclear periphery. Required for small-RNA-induced H3K9 methylation. Together with set-25, protects and stabilizes repeat-rich genomic regions by suppressing transcription-induced replication stress through methylation of H3K9. Together with spr-5, required for transgenerational fertility. This Caenorhabditis elegans protein is Histone-lysine N-methyltransferase met-2 (met-2).